The following is a 510-amino-acid chain: GTPase Der (510 aa).

2 consecutive EngA-type G domains span residues 3-166 (PVVA…ATAL) and 220-393 (IKIA…ACAT). GTP contacts are provided by residues 9-16 (GRPNVGKS), 56-60 (DTGGI), 118-121 (NKTD), 226-233 (GRPNVGKS), 273-277 (DTAGV), and 338-341 (NKWD). Positions 394 to 478 (QKTSTSMLTR…PIRIQFQEGN (85 aa)) constitute a KH-like domain.

Belongs to the TRAFAC class TrmE-Era-EngA-EngB-Septin-like GTPase superfamily. EngA (Der) GTPase family. As to quaternary structure, associates with the 50S ribosomal subunit.

In terms of biological role, GTPase that plays an essential role in the late steps of ribosome biogenesis. This Haemophilus ducreyi (strain 35000HP / ATCC 700724) protein is GTPase Der.